Here is a 434-residue protein sequence, read N- to C-terminus: UDP-N-acetylmuramoylalanine--D-glutamate ligase (434 aa).

ATP is bound at residue 117–123; it reads GTNGKST.

This sequence belongs to the MurCDEF family.

The protein resides in the cytoplasm. The enzyme catalyses UDP-N-acetyl-alpha-D-muramoyl-L-alanine + D-glutamate + ATP = UDP-N-acetyl-alpha-D-muramoyl-L-alanyl-D-glutamate + ADP + phosphate + H(+). It participates in cell wall biogenesis; peptidoglycan biosynthesis. Functionally, cell wall formation. Catalyzes the addition of glutamate to the nucleotide precursor UDP-N-acetylmuramoyl-L-alanine (UMA). The sequence is that of UDP-N-acetylmuramoylalanine--D-glutamate ligase from Sphingopyxis alaskensis (strain DSM 13593 / LMG 18877 / RB2256) (Sphingomonas alaskensis).